The primary structure comprises 665 residues: Filensin (665 aa).

The tract at residues 1–40 is head; the sequence is MYRRSYVFQTRKEQYEHADEASRAAEPERPADEGWAGATS. Phosphoserine is present on S5. The region spanning 40–320 is the IF rod domain; sequence SLAALQGLGE…RIIEIEGNRL (281 aa). Residues 41–75 are coil 1A; it reads LAALQGLGERVAAHVQRARALEQRHAGLRRQLDAF. A42 is subject to N-acetylalanine. The segment at 76–84 is linker 1; it reads QRLGELAGP. The segment at 85–184 is coil 1B; it reads EDALARQVES…RHKKNLLEVQ (100 aa). Positions 185 to 201 are linker 12; it reads TYISILQQIIHTTPPAS. The segment at 202-320 is coil 2; the sequence is IVTSGMREEK…RIIEIEGNRL (119 aa). The segment at 321–665 is tail; the sequence is TSAFIETPIP…DKKKSGEKSS (345 aa). Phosphoserine is present on residues S341 and S420. Disordered stretches follow at residues 410-439 and 506-614; these read SKFE…QISK and YDGQ…KGPP. A lipid anchor (N-myristoyl glycine) is attached at G434. Residue S513 is modified to Phosphoserine. A compositionally biased stretch (basic and acidic residues) spans 556-571; the sequence is PEEKREGEERDEESRR. Position 665 is a phosphoserine (S665).

It belongs to the intermediate filament family. As to quaternary structure, part of a complex required for lens intermediate filament formation composed of BFSP1, BFSP2 and CRYAA. Identified in a complex that contains VIM, EZR, AHNAK, BFSP1, BFSP2, ANK2, PLEC, PRX and spectrin. Found in a complex composed of PPL (via C-terminal linker domain), BFSP1 and BFSP2 in the retinal lens. Within the complex interacts with BFSP2. Interacts (via C-terminus) with MIP (via C-terminus) in aged lens fiber cells. In terms of processing, proteolytically cleaved during lens cell fiber differentiation with increased fragmentation as fiber cell age increases. Post-translationally, myristoylated at Gly-434 following proteolytic cleavage at Asp-433. Acetylated at Ala-42 following proteolytic cleavage at Leu-41. As to expression, expressed in the cortex and nucleus of the retina lens (at protein level).

The protein resides in the cell membrane. Its subcellular location is the cytoplasm. It is found in the cytoskeleton. It localises to the cell cortex. Its function is as follows. Required for the correct formation of lens intermediate filaments as part of a complex composed of BFSP1, BFSP2 and CRYAA. Involved in altering the calcium regulation of MIP water permeability. In Homo sapiens (Human), this protein is Filensin (BFSP1).